Here is a 343-residue protein sequence, read N- to C-terminus: MAFLHKTPRIAPPPEGRTGILLINLGTPDDTGYFSVRRYLSEFLSDRRVIESPPLIWQPILQSIILTKRPFASGANYARIWHKEENASPLRVYTRRQAEGLAERLRADGVPVEWGMRYGCPSVAKAVESLMDQGCDRIISIALYPQYSATTTATANDQLFRALMRLRRQPAVLTVPSFPDHPAFIRALETSVQDTLAGLSFKPQQIVASFHGLPKTCIEKGDTYRDECERTISALRQALGLSEEQMPLTFQSRFGPLEWVQPYTAPFVKALPAQGITKIAVIMPGFMVDCLETLDEIGNELREEFMEAGGEEFALVPCLNDSKGAIDLLEDLSRSAMAGFQRG.

Fe cation contacts are provided by H211 and E292.

This sequence belongs to the ferrochelatase family.

Its subcellular location is the cytoplasm. The enzyme catalyses heme b + 2 H(+) = protoporphyrin IX + Fe(2+). Its pathway is porphyrin-containing compound metabolism; protoheme biosynthesis; protoheme from protoporphyrin-IX: step 1/1. In terms of biological role, catalyzes the ferrous insertion into protoporphyrin IX. The chain is Ferrochelatase from Gluconobacter oxydans (strain 621H) (Gluconobacter suboxydans).